The following is a 363-amino-acid chain: Alanine racemase (363 aa).

Lys34 acts as the Proton acceptor; specific for D-alanine in catalysis. Lys34 is subject to N6-(pyridoxal phosphate)lysine. Residue Arg129 coordinates substrate. The Proton acceptor; specific for L-alanine role is filled by Tyr256. Met304 contributes to the substrate binding site.

Belongs to the alanine racemase family. The cofactor is pyridoxal 5'-phosphate.

The enzyme catalyses L-alanine = D-alanine. The protein operates within amino-acid biosynthesis; D-alanine biosynthesis; D-alanine from L-alanine: step 1/1. Catalyzes the interconversion of L-alanine and D-alanine. May also act on other amino acids. This chain is Alanine racemase (alr), found in Edwardsiella ictaluri (strain 93-146).